Reading from the N-terminus, the 1397-residue chain is Clustered mitochondria protein homolog (1397 aa).

The stretch at 30 to 63 (LPSFIDQKGDLKIPSHYEETITDLKLTLTVIPKT) is one TPR 1 repeat. Disordered stretches follow at residues 158 to 203 (TARG…LSRE) and 526 to 555 (DAAP…DEEE). The segment covering 161 to 203 (GEAEKSDTNEEEQEQGKGKVGKPNEKESGETKETDSQPELSRE) has biased composition (basic and acidic residues). The 273-residue stretch at 368–640 (DSSRSQLMLI…RTTPRDIEFI (273 aa)) folds into the Clu domain. The TPR 2 repeat unit spans residues 559-595 (EKVLYGLSSDSQKILEDKSFEKPLKLLSEVFHLKPHG). Composition is skewed to basic and acidic residues over residues 686–703 (EGKL…EEKS), 812–831 (EKVE…KERA), 839–860 (SDDK…NTES), and 1019–1033 (QREQ…NVEK). 3 disordered regions span residues 686–707 (EGKL…QIAL), 812–869 (EKVE…EEQP), and 1019–1050 (QREQ…PIEN). Residues 1034-1043 (KHSKKSKKKS) are compositionally biased toward basic residues. TPR repeat units lie at residues 1167–1200 (IAAY…WTST) and 1209–1242 (VNLL…CSHL). Polar residues-rich tracts occupy residues 1314–1338 (AQSK…SQAS) and 1362–1373 (PQSDPQIANQSV). The disordered stretch occupies residues 1314 to 1397 (AQSKKSPPPT…AKSKSKHTKA (84 aa)). Positions 1375-1384 (DILKFIEGKS) are enriched in basic and acidic residues. Over residues 1386–1397 (PNAKSKSKHTKA) the composition is skewed to basic residues.

The protein belongs to the CLU family. As to quaternary structure, may associate with the eukaryotic translation initiation factor 3 (eIF-3) complex.

The protein resides in the cytoplasm. Its function is as follows. mRNA-binding protein involved in proper cytoplasmic distribution of mitochondria. The chain is Clustered mitochondria protein homolog from Lodderomyces elongisporus (strain ATCC 11503 / CBS 2605 / JCM 1781 / NBRC 1676 / NRRL YB-4239) (Yeast).